Consider the following 218-residue polypeptide: tRNA (guanine-N(7)-)-methyltransferase (218 aa).

The S-adenosyl-L-methionine site is built by E43, D68, E101, and N124. Residues K128 and D160 each coordinate substrate.

This sequence belongs to the class I-like SAM-binding methyltransferase superfamily. TrmB family.

The enzyme catalyses guanosine(46) in tRNA + S-adenosyl-L-methionine = N(7)-methylguanosine(46) in tRNA + S-adenosyl-L-homocysteine. It participates in tRNA modification; N(7)-methylguanine-tRNA biosynthesis. Functionally, catalyzes the formation of N(7)-methylguanine at position 46 (m7G46) in tRNA. This is tRNA (guanine-N(7)-)-methyltransferase from Acetivibrio thermocellus (strain ATCC 27405 / DSM 1237 / JCM 9322 / NBRC 103400 / NCIMB 10682 / NRRL B-4536 / VPI 7372) (Clostridium thermocellum).